The sequence spans 725 residues: Lipoamidase (725 aa).

The tract at residues 1 to 52 (MLAQESILETTVQTETESVTTETSQTVANLESETTSQTVMQEKESSSAIAES) is disordered. Low complexity predominate over residues 9–27 (ETTVQTETESVTTETSQTV). Over residues 28–40 (ANLESETTSQTVM) the composition is skewed to polar residues. Catalysis depends on charge relay system residues K159 and S235. The active-site Acyl-ester intermediate is S259. Residues 551–686 (KINQPHVEEP…NKSMIGKQEQ (136 aa)) are disordered. The span at 556 to 637 (HVEEPDKDKE…TSEGPIEGKD (82 aa)) shows a compositional bias: basic and acidic residues. The span at 650–661 (SGSSLDNSLNSS) shows a compositional bias: low complexity. Positions 662-679 (ANQGTKSTESTHAFSNKS) are enriched in polar residues. A helical membrane pass occupies residues 700 to 720 (PSTFWIVLGGAFLVTSGTIYI).

This sequence belongs to the amidase family. As to quaternary structure, homodimer in solution.

It localises to the cell membrane. The enzyme catalyses N(6)-[(R)-lipoyl]-L-lysyl-[lipoyl-carrier protein] + H2O = L-lysyl-[lipoyl-carrier protein] + (R)-lipoate. With respect to regulation, lipoamidase activity is slightly inhibited by p-chloromercuribenzoate. In terms of biological role, amidohydrolase that releases lipoic acid from the protein-bound form. Cleaves the amide bond that links lipoic acid to the lipoylated lysine epsilon-amino groups, leading to the formation of free lipoic acid plus the unmodified protein. Shows activity toward both high molecular weight protein substrates such as a lipoyl domain and intact 2-oxoacid dehydrogenases as well as small molecule substrates such as lipoyl-lysine. Also acts on small biotinylated substrates. Hydrolyzes the synthetic substrates methyl lipoate and lipoamide. The physiologically important substrates are probably lipoyl-lysine and small peptides containing lipoyl-lysine. Lpa seems likely to enable this bacterium to utilize amide-linked forms of lipoic acid that otherwise could not be assimilated. The sequence is that of Lipoamidase from Enterococcus faecalis (Streptococcus faecalis).